A 266-amino-acid polypeptide reads, in one-letter code: F-box only protein 50 (266 aa).

Residues Met1 to Ala16 show a composition bias toward basic and acidic residues. The interval Met1–Asn53 is disordered. Pro residues predominate over residues Pro27–Pro41. Ser31, Ser37, Ser40, and Ser43 each carry phosphoserine. Thr46 carries the post-translational modification Phosphothreonine. Positions Leu86–Leu264 constitute an FBA domain.

Strongly expressed in kidney. Weakly expressed in stomach, colon, duodenum and prostate.

It is found in the cytoplasm. Its function is as follows. Promotes cell proliferation. The chain is F-box only protein 50 (Nccrp1) from Mus musculus (Mouse).